The chain runs to 358 residues: NADH-quinone oxidoreductase subunit H (358 aa).

The next 8 helical transmembrane spans lie at 20–40 (ITVG…IPLI), 95–115 (ALFY…WAVI), 128–148 (IGLL…IIAG), 168–188 (ISYE…SGSM), 206–226 (VFSW…ISAV), 253–273 (GFAF…ISAL), 290–310 (WGFI…AVLY), and 334–354 (VLIP…ISPL).

This sequence belongs to the complex I subunit 1 family. In terms of assembly, NDH-1 is composed of 14 different subunits. Subunits NuoA, H, J, K, L, M, N constitute the membrane sector of the complex.

The protein localises to the cell inner membrane. The enzyme catalyses a quinone + NADH + 5 H(+)(in) = a quinol + NAD(+) + 4 H(+)(out). NDH-1 shuttles electrons from NADH, via FMN and iron-sulfur (Fe-S) centers, to quinones in the respiratory chain. The immediate electron acceptor for the enzyme in this species is believed to be ubiquinone. Couples the redox reaction to proton translocation (for every two electrons transferred, four hydrogen ions are translocated across the cytoplasmic membrane), and thus conserves the redox energy in a proton gradient. This subunit may bind ubiquinone. This Neisseria meningitidis serogroup A / serotype 4A (strain DSM 15465 / Z2491) protein is NADH-quinone oxidoreductase subunit H.